Reading from the N-terminus, the 129-residue chain is Glycine cleavage system H protein (129 aa).

Residues Glu-24–Lys-106 form the Lipoyl-binding domain. N6-lipoyllysine is present on Lys-65.

Belongs to the GcvH family. As to quaternary structure, the glycine cleavage system is composed of four proteins: P, T, L and H. Requires (R)-lipoate as cofactor.

Its function is as follows. The glycine cleavage system catalyzes the degradation of glycine. The H protein shuttles the methylamine group of glycine from the P protein to the T protein. The polypeptide is Glycine cleavage system H protein (Aeromonas hydrophila subsp. hydrophila (strain ATCC 7966 / DSM 30187 / BCRC 13018 / CCUG 14551 / JCM 1027 / KCTC 2358 / NCIMB 9240 / NCTC 8049)).